A 152-amino-acid chain; its full sequence is Proteolipid protein 2 (152 aa).

The 119-residue stretch at 19–137 (FSRTRKGFLL…DAYITFPLRQ (119 aa)) folds into the MARVEL domain. 3 helical membrane passes run 25-45 (GFLLFAEIILCLVILICFSTS), 48-68 (GYSFLSVIEMIFAAIFFVVYM), and 85-105 (FFRTLVAAILYLITSIVVLVE). N108 carries N-linked (GlcNAc...) asparagine glycosylation. Residues 112 to 132 (IAAGALGLCAAGLFGYDAYIT) form a helical membrane-spanning segment.

It localises to the membrane. Its function is as follows. May play a role in cell differentiation in the intestinal epithelium. This is Proteolipid protein 2 (PLP2) from Bos taurus (Bovine).